The sequence spans 152 residues: Psoriasis susceptibility 1 candidate gene 1 protein homolog (152 aa).

Positions 1–31 (MTCTDQKSHSQRALGTQTPALQGPQLLNTDP) are enriched in polar residues. 2 disordered regions span residues 1–39 (MTCTDQKSHSQRALGTQTPALQGPQLLNTDPSSEETRPP) and 132–152 (APTLLYSPPPSHSPFGLSSLI).

In Pan troglodytes (Chimpanzee), this protein is Psoriasis susceptibility 1 candidate gene 1 protein homolog (PSORS1C1).